Here is a 764-residue protein sequence, read N- to C-terminus: DNA polymerase 3 (764 aa).

Belongs to the DNA polymerase type-B family.

The catalysed reaction is DNA(n) + a 2'-deoxyribonucleoside 5'-triphosphate = DNA(n+1) + diphosphate. The protein is DNA polymerase 3 (dpo3) of Saccharolobus solfataricus (strain ATCC 35092 / DSM 1617 / JCM 11322 / P2) (Sulfolobus solfataricus).